The primary structure comprises 125 residues: Large ribosomal subunit protein bL12 (125 aa).

Belongs to the bacterial ribosomal protein bL12 family. As to quaternary structure, homodimer. Part of the ribosomal stalk of the 50S ribosomal subunit. Forms a multimeric L10(L12)X complex, where L10 forms an elongated spine to which 2 to 4 L12 dimers bind in a sequential fashion. Binds GTP-bound translation factors.

Forms part of the ribosomal stalk which helps the ribosome interact with GTP-bound translation factors. Is thus essential for accurate translation. This chain is Large ribosomal subunit protein bL12, found in Erythrobacter litoralis (strain HTCC2594).